Here is a 316-residue protein sequence, read N- to C-terminus: Aspartate carbamoyltransferase catalytic subunit (316 aa).

Arginine 58 and threonine 59 together coordinate carbamoyl phosphate. Lysine 86 is a binding site for L-aspartate. Positions 108, 136, and 139 each coordinate carbamoyl phosphate. Residues arginine 169 and arginine 223 each contribute to the L-aspartate site. 2 residues coordinate carbamoyl phosphate: glycine 264 and proline 265.

Belongs to the aspartate/ornithine carbamoyltransferase superfamily. ATCase family. Heterododecamer (2C3:3R2) of six catalytic PyrB chains organized as two trimers (C3), and six regulatory PyrI chains organized as three dimers (R2).

The catalysed reaction is carbamoyl phosphate + L-aspartate = N-carbamoyl-L-aspartate + phosphate + H(+). Its pathway is pyrimidine metabolism; UMP biosynthesis via de novo pathway; (S)-dihydroorotate from bicarbonate: step 2/3. Catalyzes the condensation of carbamoyl phosphate and aspartate to form carbamoyl aspartate and inorganic phosphate, the committed step in the de novo pyrimidine nucleotide biosynthesis pathway. The protein is Aspartate carbamoyltransferase catalytic subunit of Granulibacter bethesdensis (strain ATCC BAA-1260 / CGDNIH1).